We begin with the raw amino-acid sequence, 56 residues long: Ovomucoid (56 aa).

One can recognise a Kazal-like domain in the interval 6 to 56; sequence VDCSEYPKPACMSEYRPLCGSDNKTYVNKCNFCNAVVESNGTLTLSHFGKC. 3 disulfide bridges follow: Cys-8–Cys-38, Cys-16–Cys-35, and Cys-24–Cys-56. Asn-45 carries an N-linked (GlcNAc...) asparagine glycan.

It is found in the secreted. This Colinus virginianus (Northern bobwhite) protein is Ovomucoid.